A 622-amino-acid chain; its full sequence is Palmitoyltransferase ZDHHC17 (622 aa).

The Cytoplasmic segment spans residues 1–294 (MADGPDEYDT…LKADKEFRQK (294 aa)). The interval 1 to 295 (MADGPDEYDT…KADKEFRQKV (295 aa)) is necessary and sufficient for interaction with DNAJC5 and SNAP25. 7 ANK repeats span residues 41 to 76 (THVD…VRQP), 79 to 108 (ENVT…IVDQ), 113 to 142 (LNST…DPSL), 146 to 175 (EGCS…DVDM), 179 to 209 (NGMT…SVNL), 214 to 243 (HKNT…NVDA), and 247 to 276 (KGES…AKGY). 2 consecutive transmembrane segments (helical) span residues 295-315 (VMLG…DLNI) and 316-336 (DSWL…QFLS). The Lumenal portion of the chain corresponds to 337-347 (KSFFDHSMHSA). Residues 348 to 368 (LPLGIYLATKFWMYVTWFFWF) traverse the membrane as a helical segment. Residues 369–371 (WND) lie on the Cytoplasmic side of the membrane. The chain crosses the membrane as a helical span at residues 372-392 (LSFLSIHLPFLANSVALFYNF). Residues 393–470 (GKSWKSDPGI…GNCVGAGNHR (78 aa)) lie on the Lumenal side of the membrane. The 51-residue stretch at 427–477 (IFCSTCLIRKPVRSKHCGVCNRCIAKFDHHCPWVGNCVGAGNHRYFMGYLF) folds into the DHHC domain. Cysteine 457 functions as the S-palmitoyl cysteine intermediate in the catalytic mechanism. A helical transmembrane segment spans residues 471–491 (YFMGYLFFLLFMICWMIYGCV). Residues 492-506 (SYWGLHCETTYTKDG) are Cytoplasmic-facing. A helical membrane pass occupies residues 507–526 (FWTYITQIATCSPWMFWMFL). Residues 527–529 (NSV) are Lumenal-facing. A helical membrane pass occupies residues 530 to 552 (FHFMWVAVLLMCQMYQITCLGIT). Residues 553-622 (TNERMNARRY…QISGSGYQLV (70 aa)) are Cytoplasmic-facing.

This sequence belongs to the DHHC palmitoyltransferase family. AKR/ZDHHC17 subfamily. In terms of assembly, interacts (via ANK repeats) with numerous proteins (via the consensus sequence motif [VIAP]-[VIT]-x-x-Q-P). Interacts (via ANK repeats) with CLIP3. Interacts (via ANK repeats) with HTT. Interacts (via ANK repeats) with DNAJC5 (via C-terminus). Interacts (via ANK repeats) with MAP6. Interacts (via ANK repeats) with SNAP23. Interacts (via ANK repeats) with SNAP25. Interacts (via ANK repeats) with EVL. Interacts with SPRED1 and SPRED3. Interacts with GPM6A and OPTN. May interact (via ANK repeats) with SPRED2. May interact with NTRK1; may regulate its localization and function. In terms of processing, autopalmitoylated. Autopalmitoylation has a regulatory role in ZDHHC17-mediated Mg(2+) transport.

It is found in the golgi apparatus membrane. It localises to the cytoplasmic vesicle membrane. Its subcellular location is the presynaptic cell membrane. The enzyme catalyses L-cysteinyl-[protein] + hexadecanoyl-CoA = S-hexadecanoyl-L-cysteinyl-[protein] + CoA. It catalyses the reaction L-cysteinyl-[protein] + tetradecanoyl-CoA = S-tetradecanoyl-L-cysteinyl-[protein] + CoA. The catalysed reaction is L-cysteinyl-[protein] + octadecanoyl-CoA = S-octadecanoyl-L-cysteinyl-[protein] + CoA. Its function is as follows. Palmitoyltransferase that catalyzes the addition of palmitate onto various protein substrates and is involved in a variety of cellular processes. Has no stringent fatty acid selectivity and in addition to palmitate can also transfer onto target proteins myristate from tetradecanoyl-CoA and stearate from octadecanoyl-CoA. Palmitoyltransferase specific for a subset of neuronal proteins, including SNAP25, DLG4/PSD95, GAD2, SYT1 and HTT. Also palmitoylates neuronal protein GPM6A as well as SPRED1 and SPRED3. Could also play a role in axonogenesis through the regulation of NTRK1 and the downstream ERK1/ERK2 signaling cascade. May be involved in the sorting or targeting of critical proteins involved in the initiating events of endocytosis at the plasma membrane. May play a role in Mg(2+) transport. Could also palmitoylate DNAJC5 and regulate its localization to the Golgi membrane. Palmitoylates CASP6, thereby preventing its dimerization and subsequent activation. This chain is Palmitoyltransferase ZDHHC17, found in Rattus norvegicus (Rat).